We begin with the raw amino-acid sequence, 175 residues long: Adenylate kinase isoenzyme 6 homolog (175 aa).

ATP contacts are provided by Gly18, Gly20, Lys21, Thr22, and Thr23. Residues 38–61 (CIGDVVKENHLHFGFDEKWKTYDV) form an NMPbind region. The segment at 113–123 (SRGYSLEKIQE) is LID. Residue Arg114 coordinates ATP.

It belongs to the adenylate kinase family. AK6 subfamily. Interacts with small ribosomal subunit protein uS11. Not a structural component of 43S pre-ribosomes, but transiently interacts with them by binding to uS11.

The protein resides in the cytoplasm. It is found in the nucleus. The catalysed reaction is AMP + ATP = 2 ADP. The enzyme catalyses ATP + H2O = ADP + phosphate + H(+). Broad-specificity nucleoside monophosphate (NMP) kinase that catalyzes the reversible transfer of the terminal phosphate group between nucleoside triphosphates and monophosphates. Also has ATPase activity. Involved in the late cytoplasmic maturation steps of the 40S ribosomal particles, specifically 18S rRNA maturation. While NMP activity is not required for ribosome maturation, ATPase activity is. Associates transiently with small ribosomal subunit protein uS11. ATP hydrolysis breaks the interaction with uS11. May temporarily remove uS11 from the ribosome to enable a conformational change of the ribosomal RNA that is needed for the final maturation step of the small ribosomal subunit. Its NMP activity may have a role in nuclear energy homeostasis. This Schizosaccharomyces pombe (strain 972 / ATCC 24843) (Fission yeast) protein is Adenylate kinase isoenzyme 6 homolog (fap7).